The primary structure comprises 241 residues: Large ribosomal subunit protein uL2 (241 aa).

Positions 200–241 (AVDHPHGGGNRQHPGRPTTISRHAPAGRKVGSIAAKRTGKRR) are disordered.

This sequence belongs to the universal ribosomal protein uL2 family. In terms of assembly, part of the 50S ribosomal subunit. Forms a bridge to the 30S subunit in the 70S ribosome.

Functionally, one of the primary rRNA binding proteins. Required for association of the 30S and 50S subunits to form the 70S ribosome, for tRNA binding and peptide bond formation. It has been suggested to have peptidyltransferase activity; this is somewhat controversial. Makes several contacts with the 16S rRNA in the 70S ribosome. In Methanosphaera stadtmanae (strain ATCC 43021 / DSM 3091 / JCM 11832 / MCB-3), this protein is Large ribosomal subunit protein uL2.